Here is a 198-residue protein sequence, read N- to C-terminus: MKVTKADIVISAVKPEQYPDSDLPEIALAGRSNVGKSSFINKILNRKKLVRISSKPGKTQTLNFFLINEMMHFVDVPGYGYAKVSKSERAAWGKMIETYFTTRKQLDAAVLVVDLRHQPTSDDVMMYDFLKHYEIPTIIIATKADKIPKGKWQKHLKVVKETLAVEIGDEIVLFSSETGLGKEEAWKAIHKMTKTKNA.

One can recognise an EngB-type G domain in the interval 22 to 195 (DLPEIALAGR…WKAIHKMTKT (174 aa)). Residues 30-37 (GRSNVGKS), 57-61 (GKTQT), 75-78 (DVPG), 142-145 (TKAD), and 174-176 (FSS) contribute to the GTP site. Mg(2+)-binding residues include Ser-37 and Thr-59.

Belongs to the TRAFAC class TrmE-Era-EngA-EngB-Septin-like GTPase superfamily. EngB GTPase family. Requires Mg(2+) as cofactor.

Necessary for normal cell division and for the maintenance of normal septation. The polypeptide is Probable GTP-binding protein EngB (Bacillus cereus (strain G9842)).